A 531-amino-acid chain; its full sequence is Cytochrome P450 monooxygenase peniB (531 aa).

A helical transmembrane segment spans residues Ile30–Phe48. Heme is bound at residue Cys445.

Belongs to the cytochrome P450 family. Requires heme as cofactor.

Its subcellular location is the membrane. The catalysed reaction is silphinene-15-oate + 2 reduced [NADPH--hemoprotein reductase] + 2 O2 = gamma-lactone-2-keto[5.5.5.5]fenestrane + 2 oxidized [NADPH--hemoprotein reductase] + 3 H2O + H(+). Its pathway is secondary metabolite biosynthesis; terpenoid biosynthesis. Functionally, cytochrome P450 monooxygenase; part of the gene cluster that mediates the biosynthesis of penifulvin A, a potent insecticidal sesquiterpene that features a [5.5.5.6]dioxafenestrane ring. Within the pathway, peniB catalyzes the multi-step oxidation of silphinene to synthesize gamma-lactone-2-keto[5.5.5.5]fenestrane, including oxidation of the C15 methylgroup in silphinene to form silphinene-15-oic acid, activationof the C1-C2 double bond to form the gamma-lactone-2-hydroxy[5.5.5.5]fenestrane, and dehydrogenation of the hydroxy group at C2 of gamma-lactone-2-hydroxy[5.5.5.5]fenestrane to generate gamma-lactone-2-keto[5.5.5.5]fenestrane. The first step of the pathway is performed by the sesquiterpene cyclase peniA that generates the angular triquinane scaffold silphinene via cyclization of the linear farnesyl pyrophosphate (FPP). The cytochrome P450 monooxygenase peniB and the flavin-dependent monooxygenase peniC then catalyze a series of oxidation reactions to transform silphinene into penifulvin A. This is Cytochrome P450 monooxygenase peniB from Penicillium patulum (Penicillium griseofulvum).